Reading from the N-terminus, the 163-residue chain is Transcriptional repressor NrdR (163 aa).

The segment at 3–34 (CPFCRHPDSRVVDSRVSDDGSSIRRRRQCPQC) is a zinc-finger region. An ATP-cone domain is found at 46–136 (LTVIKRSGIG…VYQAFESLDD (91 aa)).

Belongs to the NrdR family. Zn(2+) is required as a cofactor.

Negatively regulates transcription of bacterial ribonucleotide reductase nrd genes and operons by binding to NrdR-boxes. This chain is Transcriptional repressor NrdR, found in Renibacterium salmoninarum (strain ATCC 33209 / DSM 20767 / JCM 11484 / NBRC 15589 / NCIMB 2235).